The primary structure comprises 353 residues: Ferrochelatase (353 aa).

Residues His223 and Glu304 each coordinate Fe cation.

This sequence belongs to the ferrochelatase family.

It is found in the cytoplasm. The catalysed reaction is heme b + 2 H(+) = protoporphyrin IX + Fe(2+). It functions in the pathway porphyrin-containing compound metabolism; protoheme biosynthesis; protoheme from protoporphyrin-IX: step 1/1. In terms of biological role, catalyzes the ferrous insertion into protoporphyrin IX. This is Ferrochelatase from Mesorhizobium japonicum (strain LMG 29417 / CECT 9101 / MAFF 303099) (Mesorhizobium loti (strain MAFF 303099)).